Consider the following 640-residue polypeptide: Chaperone protein HtpG (640 aa).

The segment at 1–348 is a; substrate-binding; sequence MADVAHQETH…SNDLPLNVSR (348 aa). The b stretch occupies residues 349 to 565; sequence EILQDNKITQ…GTGMSTQMIK (217 aa). A c region spans residues 566 to 640; it reads LMQAAGQPVP…LNTLLMNLAK (75 aa).

This sequence belongs to the heat shock protein 90 family. As to quaternary structure, homodimer.

The protein localises to the cytoplasm. Functionally, molecular chaperone. Has ATPase activity. The chain is Chaperone protein HtpG from Pseudoalteromonas atlantica (strain T6c / ATCC BAA-1087).